Consider the following 91-residue polypeptide: Probable Thioredoxin (91 aa).

Positions 1–91 constitute a Glutaredoxin domain; sequence MVMMKLFTSP…LKGGEEYGAS (91 aa). C12 and C15 form a disulfide bridge.

The protein belongs to the glutaredoxin family.

The protein resides in the cytoplasm. Its function is as follows. Acts to maintain redox homeostasis; functions as a protein disulfide reductase. The polypeptide is Probable Thioredoxin (Archaeoglobus fulgidus (strain ATCC 49558 / DSM 4304 / JCM 9628 / NBRC 100126 / VC-16)).